The chain runs to 344 residues: Phenylalanine--tRNA ligase alpha subunit (344 aa).

A Mg(2+)-binding site is contributed by Glu256.

The protein belongs to the class-II aminoacyl-tRNA synthetase family. Phe-tRNA synthetase alpha subunit type 1 subfamily. As to quaternary structure, tetramer of two alpha and two beta subunits. The cofactor is Mg(2+).

The protein localises to the cytoplasm. It catalyses the reaction tRNA(Phe) + L-phenylalanine + ATP = L-phenylalanyl-tRNA(Phe) + AMP + diphosphate + H(+). The protein is Phenylalanine--tRNA ligase alpha subunit of Shouchella clausii (strain KSM-K16) (Alkalihalobacillus clausii).